The sequence spans 338 residues: uncharacterized protein (338 aa).

The next 3 helical transmembrane spans lie at 11-31 (ILSL…TFAI), 249-269 (IAVF…IIPA), and 318-338 (VPTP…GLGL).

The protein localises to the cell membrane. This is an uncharacterized protein from Methanocaldococcus jannaschii (strain ATCC 43067 / DSM 2661 / JAL-1 / JCM 10045 / NBRC 100440) (Methanococcus jannaschii).